Reading from the N-terminus, the 724-residue chain is uncharacterized protein (724 aa).

4 disordered regions span residues 97 to 131 (RKSF…YPSP), 187 to 252 (ETKI…FETE), 309 to 434 (FETE…TSKL), and 454 to 473 (RGVE…VAEK). Residues 115 to 128 (TRSASYSESNNSFY) show a composition bias toward polar residues. A coiled-coil region spans residues 187–217 (ETKIGIEEENEESEILAEEKEEEDNDFSVLE). The span at 193-212 (EEENEESEILAEEKEEEDND) shows a compositional bias: acidic residues. 2 stretches are compositionally biased toward basic and acidic residues: residues 223 to 252 (QEIK…FETE) and 309 to 322 (FETE…DHSE). 2 stretches are compositionally biased toward low complexity: residues 323–333 (TTTSETDSTES) and 347–366 (SPQT…SLRS). Residues 367 to 388 (QPPPPPPSPEHKAPAPPPPPPM) show a composition bias toward pro residues. The span at 400–410 (FSKTHSTNGDN) shows a compositional bias: polar residues. Coiled-coil stretches lie at residues 495 to 522 (SYFQ…HSFQ) and 649 to 678 (MELA…RAKR).

This is an uncharacterized protein from Arabidopsis thaliana (Mouse-ear cress).